The following is a 533-amino-acid chain: Ribonuclease Y (533 aa).

A disordered region spans residues Val-16–Ile-41. A compositionally biased stretch (basic and acidic residues) spans Arg-22 to Ile-41. In terms of domain architecture, KH spans Val-223–Asp-289. The HD domain occupies Val-349–Gly-442.

The protein belongs to the RNase Y family.

In terms of biological role, endoribonuclease that initiates mRNA decay. The sequence is that of Ribonuclease Y from Parafrankia sp. (strain EAN1pec).